The sequence spans 150 residues: Catabolic 3-dehydroquinase 1 (150 aa).

The active-site Proton acceptor is the Tyr-24. Substrate-binding residues include Asn-75, His-81, and Asp-88. His-101 serves as the catalytic Proton donor. Residues 102–103 (VS) and Arg-112 contribute to the substrate site.

This sequence belongs to the type-II 3-dehydroquinase family. In terms of assembly, homododecamer. Adopts a ring-like structure, composed of an arrangement of two hexameric rings stacked on top of one another.

The catalysed reaction is 3-dehydroquinate = 3-dehydroshikimate + H2O. It functions in the pathway aromatic compound metabolism; 3,4-dihydroxybenzoate biosynthesis; 3,4-dihydroxybenzoate from 3-dehydroquinate: step 1/2. Functionally, is involved in the catabolism of quinate. Allows the utilization of quinate as carbon source via the beta-ketoadipate pathway. The polypeptide is Catabolic 3-dehydroquinase 1 (Neosartorya fischeri (strain ATCC 1020 / DSM 3700 / CBS 544.65 / FGSC A1164 / JCM 1740 / NRRL 181 / WB 181) (Aspergillus fischerianus)).